The following is a 215-amino-acid chain: Elongation factor Ts (215 aa).

Residues 80–83 are involved in Mg(2+) ion dislocation from EF-Tu; that stretch reads TDFV.

The protein belongs to the EF-Ts family.

The protein localises to the cytoplasm. Its function is as follows. Associates with the EF-Tu.GDP complex and induces the exchange of GDP to GTP. It remains bound to the aminoacyl-tRNA.EF-Tu.GTP complex up to the GTP hydrolysis stage on the ribosome. This chain is Elongation factor Ts, found in Alkaliphilus metalliredigens (strain QYMF).